A 313-amino-acid polypeptide reads, in one-letter code: WD repeat-containing protein 82-B (313 aa).

6 WD repeats span residues 19-58, 105-144, 146-184, 192-231, 236-276, and 280-313; these read ENSD…PKRT, GHSK…CQGL, HLQG…KGPF, DRTC…VMHT, NNSK…KVAV, and KHTG…TIDD.

It belongs to the WD repeat SWD2 family. As to quaternary structure, component of the SET1/COMPASS complex. Component of the PNUTS-PP1 phosphatase complex.

It localises to the nucleus. Its subcellular location is the chromosome. The protein resides in the cytoplasm. Its function is as follows. Regulatory component of the SET1/COMPASS complex implicated in the tethering of this complex to transcriptional start sites of active genes. Facilitates histone H3 'Lys-4' methylation (H3K4me) via recruitment of the SETD1A or SETD1B to the 'Ser-5' phosphorylated C-terminal domain (CTD) of RNA polymerase II large subunit (POLR2A). Component of the PNUTS-PP1 protein phosphatase complex, a protein phosphatase 1 (PP1) complex that promotes RNA polymerase II transcription pause-release, allowing transcription elongation. This chain is WD repeat-containing protein 82-B (wdr82-b), found in Xenopus laevis (African clawed frog).